The primary structure comprises 71 residues: Putative membrane protein insertion efficiency factor (71 aa).

Belongs to the UPF0161 family.

The protein localises to the cell membrane. Could be involved in insertion of integral membrane proteins into the membrane. This is Putative membrane protein insertion efficiency factor from Clostridium acetobutylicum (strain ATCC 824 / DSM 792 / JCM 1419 / IAM 19013 / LMG 5710 / NBRC 13948 / NRRL B-527 / VKM B-1787 / 2291 / W).